The primary structure comprises 506 residues: Galactose/methyl galactoside import ATP-binding protein MglA (506 aa).

2 consecutive ABC transporter domains span residues 14–249 and 264–506; these read LTMT…VGRE and VILE…AKYL. Residue 46-53 participates in ATP binding; that stretch reads GENGAGKS.

It belongs to the ABC transporter superfamily. Galactose/methyl galactoside importer (TC 3.A.1.2.3) family. The complex is composed of one ATP-binding protein (MglA), two transmembrane proteins (MglC) and a solute-binding protein (MglB).

It is found in the cell inner membrane. The catalysed reaction is D-galactose(out) + ATP + H2O = D-galactose(in) + ADP + phosphate + H(+). It catalyses the reaction methyl beta-D-galactoside(out) + ATP + H2O = methyl beta-D-galactoside(in) + ADP + phosphate + H(+). In terms of biological role, part of the ABC transporter complex MglABC involved in galactose/methyl galactoside import. Responsible for energy coupling to the transport system. This Mannheimia succiniciproducens (strain KCTC 0769BP / MBEL55E) protein is Galactose/methyl galactoside import ATP-binding protein MglA.